A 701-amino-acid chain; its full sequence is Ribosomal RNA large subunit methyltransferase K/L (701 aa).

The THUMP domain maps to 44 to 155 (QAYKICLWSR…SDKLTVYLDL (112 aa)).

It belongs to the methyltransferase superfamily. RlmKL family.

Its subcellular location is the cytoplasm. It catalyses the reaction guanosine(2445) in 23S rRNA + S-adenosyl-L-methionine = N(2)-methylguanosine(2445) in 23S rRNA + S-adenosyl-L-homocysteine + H(+). The enzyme catalyses guanosine(2069) in 23S rRNA + S-adenosyl-L-methionine = N(2)-methylguanosine(2069) in 23S rRNA + S-adenosyl-L-homocysteine + H(+). Specifically methylates the guanine in position 2445 (m2G2445) and the guanine in position 2069 (m7G2069) of 23S rRNA. This is Ribosomal RNA large subunit methyltransferase K/L from Pseudoalteromonas atlantica (strain T6c / ATCC BAA-1087).